We begin with the raw amino-acid sequence, 268 residues long: uncharacterized protein (268 aa).

It belongs to the glycosyltransferase 2 family.

This is an uncharacterized protein from Bacillus subtilis (strain 168).